Here is a 459-residue protein sequence, read N- to C-terminus: Cysteine--tRNA ligase (459 aa).

Cys-27 lines the Zn(2+) pocket. A 'HIGH' region motif is present at residues 29-39 (PTVYNFVHIGN). Zn(2+) is bound by residues Cys-211, His-236, and Glu-240. A 'KMSKS' region motif is present at residues 269 to 273 (KMSKS). An ATP-binding site is contributed by Lys-272.

Belongs to the class-I aminoacyl-tRNA synthetase family. Monomer. Zn(2+) is required as a cofactor.

The protein resides in the cytoplasm. It carries out the reaction tRNA(Cys) + L-cysteine + ATP = L-cysteinyl-tRNA(Cys) + AMP + diphosphate. The protein is Cysteine--tRNA ligase of Ehrlichia canis (strain Jake).